Consider the following 1024-residue polypeptide: Beta-galactosidase (1024 aa).

The substrate site is built by Asn103 and Asp202. Asp202 is a Na(+) binding site. The Mg(2+) site is built by Glu417, His419, and Glu462. Substrate-binding positions include Glu462 and 538 to 541 (EYAH). The active-site Proton donor is Glu462. The active-site Nucleophile is the Glu538. Asn598 contacts Mg(2+). Phe602 and Asn605 together coordinate Na(+). Positions 605 and 1000 each coordinate substrate.

It belongs to the glycosyl hydrolase 2 family. As to quaternary structure, homotetramer. It depends on Mg(2+) as a cofactor. The cofactor is Na(+).

It carries out the reaction Hydrolysis of terminal non-reducing beta-D-galactose residues in beta-D-galactosides.. The polypeptide is Beta-galactosidase (Klebsiella pneumoniae).